The primary structure comprises 496 residues: Ribose import ATP-binding protein RbsA (496 aa).

2 consecutive ABC transporter domains span residues 5–242 and 252–496; these read IEMK…VGRS and SQIG…TGGE. ATP is bound at residue 37-44; the sequence is GENGAGKS.

Belongs to the ABC transporter superfamily. Ribose importer (TC 3.A.1.2.1) family. The complex is composed of an ATP-binding protein (RbsA), two transmembrane proteins (RbsC) and a solute-binding protein (RbsB).

Its subcellular location is the cell membrane. It catalyses the reaction D-ribose(out) + ATP + H2O = D-ribose(in) + ADP + phosphate + H(+). Part of the ABC transporter complex RbsABC involved in ribose import. Responsible for energy coupling to the transport system. This Bacillus cereus (strain ATCC 14579 / DSM 31 / CCUG 7414 / JCM 2152 / NBRC 15305 / NCIMB 9373 / NCTC 2599 / NRRL B-3711) protein is Ribose import ATP-binding protein RbsA.